The following is a 387-amino-acid chain: Carboxynorspermidine/carboxyspermidine decarboxylase (387 aa).

N6-(pyridoxal phosphate)lysine is present on Lys-51. The substrate site is built by Glu-248 and Asp-284.

Belongs to the Orn/Lys/Arg decarboxylase class-II family. NspC subfamily. Homodimer. Pyridoxal 5'-phosphate is required as a cofactor.

The protein resides in the cytoplasm. It catalyses the reaction carboxynorspermidine + H(+) = norspermidine + CO2. The enzyme catalyses carboxyspermidine + H(+) = spermidine + CO2. Functionally, catalyzes the decarboxylation of carboxynorspermidine and carboxyspermidine. Essential for biofilm formation. This chain is Carboxynorspermidine/carboxyspermidine decarboxylase, found in Vibrio cholerae serotype O1 (strain ATCC 39315 / El Tor Inaba N16961).